The chain runs to 373 residues: 4-hydroxy-3-methylbut-2-en-1-yl diphosphate synthase (flavodoxin) (373 aa).

[4Fe-4S] cluster contacts are provided by cysteine 270, cysteine 273, cysteine 305, and glutamate 312.

The protein belongs to the IspG family. [4Fe-4S] cluster serves as cofactor.

The catalysed reaction is (2E)-4-hydroxy-3-methylbut-2-enyl diphosphate + oxidized [flavodoxin] + H2O + 2 H(+) = 2-C-methyl-D-erythritol 2,4-cyclic diphosphate + reduced [flavodoxin]. The protein operates within isoprenoid biosynthesis; isopentenyl diphosphate biosynthesis via DXP pathway; isopentenyl diphosphate from 1-deoxy-D-xylulose 5-phosphate: step 5/6. In terms of biological role, converts 2C-methyl-D-erythritol 2,4-cyclodiphosphate (ME-2,4cPP) into 1-hydroxy-2-methyl-2-(E)-butenyl 4-diphosphate. This is 4-hydroxy-3-methylbut-2-en-1-yl diphosphate synthase (flavodoxin) from Serratia proteamaculans (strain 568).